The sequence spans 94 residues: Large ribosomal subunit protein bL25 (94 aa).

The protein belongs to the bacterial ribosomal protein bL25 family. As to quaternary structure, part of the 50S ribosomal subunit; part of the 5S rRNA/L5/L18/L25 subcomplex. Contacts the 5S rRNA. Binds to the 5S rRNA independently of L5 and L18.

Functionally, this is one of the proteins that binds to the 5S RNA in the ribosome where it forms part of the central protuberance. This chain is Large ribosomal subunit protein bL25, found in Serratia proteamaculans (strain 568).